A 207-amino-acid chain; its full sequence is Pyridoxal 5'-phosphate synthase subunit PdxT (207 aa).

51–53 is a binding site for L-glutamine; the sequence is GES. Residue Cys-83 is the Nucleophile of the active site. L-glutamine is bound by residues Arg-112 and 143–144; that span reads IR. Catalysis depends on charge relay system residues His-184 and Glu-186.

Belongs to the glutaminase PdxT/SNO family. As to quaternary structure, in the presence of PdxS, forms a dodecamer of heterodimers. Only shows activity in the heterodimer.

The catalysed reaction is aldehydo-D-ribose 5-phosphate + D-glyceraldehyde 3-phosphate + L-glutamine = pyridoxal 5'-phosphate + L-glutamate + phosphate + 3 H2O + H(+). The enzyme catalyses L-glutamine + H2O = L-glutamate + NH4(+). Its pathway is cofactor biosynthesis; pyridoxal 5'-phosphate biosynthesis. Functionally, catalyzes the hydrolysis of glutamine to glutamate and ammonia as part of the biosynthesis of pyridoxal 5'-phosphate. The resulting ammonia molecule is channeled to the active site of PdxS. This chain is Pyridoxal 5'-phosphate synthase subunit PdxT, found in Kineococcus radiotolerans (strain ATCC BAA-149 / DSM 14245 / SRS30216).